The chain runs to 179 residues: uncharacterized protein (179 aa).

A run of 3 helical transmembrane segments spans residues 29 to 49, 76 to 96, and 97 to 117; these read LLGI…GPLI, AKHM…DAYS, and GAII…LLWA.

This sequence belongs to the DP1 family.

The protein resides in the membrane. This is an uncharacterized protein from Encephalitozoon cuniculi (strain GB-M1) (Microsporidian parasite).